Here is a 223-residue protein sequence, read N- to C-terminus: Transcriptional regulatory protein PhoP (223 aa).

One can recognise a Response regulatory domain in the interval 2–116 (RVLVVEDNAL…EVMARMQALM (115 aa)). Aspartate 51 is subject to 4-aspartylphosphate. The segment at residues 124–222 (SQVISLPPFQ…VRGQGYLFEL (99 aa)) is a DNA-binding region (ompR/PhoB-type).

Post-translationally, phosphorylated by PhoQ.

Its subcellular location is the cytoplasm. Functionally, member of the two-component regulatory system PhoQ/PhoP involved in virulence, adaptation to low Mg(2+) environments and the control of acid resistance genes. The polypeptide is Transcriptional regulatory protein PhoP (phoP) (Escherichia coli O157:H7).